Consider the following 432-residue polypeptide: Glutamyl-tRNA reductase (432 aa).

Residues 49–52, S109, 114–116, and Q120 each bind substrate; these read TCNR and EGQ. The active-site Nucleophile is C50. Residue 189-194 participates in NADP(+) binding; it reads GAGKMS.

Belongs to the glutamyl-tRNA reductase family. In terms of assembly, homodimer.

The protein localises to the plastid. It localises to the cyanelle. The catalysed reaction is (S)-4-amino-5-oxopentanoate + tRNA(Glu) + NADP(+) = L-glutamyl-tRNA(Glu) + NADPH + H(+). It functions in the pathway porphyrin-containing compound metabolism; protoporphyrin-IX biosynthesis; 5-aminolevulinate from L-glutamyl-tRNA(Glu): step 1/2. Its pathway is porphyrin-containing compound metabolism; chlorophyll biosynthesis. Its function is as follows. Catalyzes the NADPH-dependent reduction of glutamyl-tRNA(Glu) to glutamate 1-semialdehyde (GSA). The polypeptide is Glutamyl-tRNA reductase (Cyanophora paradoxa).